The chain runs to 299 residues: Nucleophosmin (299 aa).

A compositionally biased stretch (acidic residues) spans 125 to 134; sequence ESSDDEDEEH. Residues 125-247 are disordered; that stretch reads ESSDDEDEEH…TPKTPLSSEE (123 aa). The Nuclear localization signal signature appears at 153–158; it reads PRKKTR. Residues 160 to 187 show a composition bias toward acidic residues; the sequence is EEEEEDSDEDDDDDEDDDDEDDDEEEEE. Basic and acidic residues predominate over residues 188–197; sequence TPVKKTDSTK. Residues 189-195 carry the Nuclear localization signal motif; the sequence is PVKKTDS. Repeats lie at residues 218–220, 221–223, 237–239, and 240–242; these read KTP. The 4 X 3 AA repeats of K-T-P stretch occupies residues 218 to 242; sequence KTPKTPEQKGKQDTKPQTPKTPKTP. Residues 221 to 231 show a composition bias toward basic and acidic residues; that stretch reads KTPEQKGKQDT. The segment covering 232-242 has biased composition (low complexity); it reads KPQTPKTPKTP.

This sequence belongs to the nucleoplasmin family. In terms of assembly, decamer formed by two pentameric rings associated in a head-to-head fashion. Phosphorylated.

The protein localises to the cytoplasm. It is found in the nucleus. It localises to the nucleoplasm. Its subcellular location is the nucleolus. Functionally, acts as a chaperonin for the core histones H3, H2B and H4. Associated with nucleolar ribonucleoprotein structures and bind single-stranded nucleic acids. It may function in the assembly and/or transport of ribosome. May stimulate endonuclease activity on apurinic/apyrimidinic (AP) double-stranded DNA. May inhibit endonuclease activity on AP single-stranded RNA. The polypeptide is Nucleophosmin (npm1) (Xenopus laevis (African clawed frog)).